Reading from the N-terminus, the 623-residue chain is Mu-like prophage FluMu defective tail fiber protein (623 aa).

To phage Mu protein S.

This is Mu-like prophage FluMu defective tail fiber protein from Haemophilus influenzae (strain ATCC 51907 / DSM 11121 / KW20 / Rd).